A 609-amino-acid chain; its full sequence is N-acetyltransferase ESCO2 (609 aa).

4 disordered regions span residues 1–71 (MLSR…RVSP), 100–165 (EAKS…TDQV), 197–241 (KKPT…SPVR), and 314–357 (PDHD…LTAT). 2 stretches are compositionally biased toward polar residues: residues 13–22 (AESNPSKKQI) and 41–54 (ISLNSPQKIPSTPK). Positions 126 to 135 (PAKKVQKKPR) are enriched in basic residues. Residues 214-230 (PTYEKPSIRKPVREKEL) show a composition bias toward basic and acidic residues. The span at 345-355 (PLNSSTPSALT) shows a compositional bias: polar residues. The segment at 392–416 (TTCASCGMLYSTDSPEDNFQHTQFH) adopts a CCHH-type zinc-finger fold.

This sequence belongs to the acetyltransferase family. ECO subfamily.

The protein localises to the nucleus. The protein resides in the chromosome. It carries out the reaction L-lysyl-[protein] + acetyl-CoA = N(6)-acetyl-L-lysyl-[protein] + CoA + H(+). In terms of biological role, acetyltransferase required for the establishment of sister chromatid cohesion. Couples the processes of cohesion and DNA replication to ensure that only sister chromatids become paired together. Essential for early development. The chain is N-acetyltransferase ESCO2 (esco2) from Danio rerio (Zebrafish).